The following is a 427-amino-acid chain: UPF0597 protein CPF_0803 (427 aa).

Belongs to the UPF0597 family.

This is UPF0597 protein CPF_0803 from Clostridium perfringens (strain ATCC 13124 / DSM 756 / JCM 1290 / NCIMB 6125 / NCTC 8237 / Type A).